A 44-amino-acid polypeptide reads, in one-letter code: Mu-conotoxin-like Cal 12.1.2h (44 aa).

Disulfide bonds link C3/C16, C11/C28, C18/C33, and C27/C38. W17 carries the post-translational modification 6'-bromotryptophan. Position 23 is a 4-hydroxyproline (P23). A 6'-bromotryptophan mark is found at W36 and W37. Position 39 is a 4-hydroxyproline (P39). W43 carries the 6'-bromotryptophan modification.

As to expression, expressed by the venom duct.

It is found in the secreted. Mu-conotoxins block voltage-gated sodium channels. This toxin reversibly blocks voltage-gated sodium channel in cephalopods, with no alteration in the voltage dependence of sodium conductance or on the kinetics of inactivation. The chain is Mu-conotoxin-like Cal 12.1.2h from Californiconus californicus (California cone).